The primary structure comprises 418 residues: STE20-related kinase adapter protein beta (418 aa).

The region spanning 58-369 (YELQVEIGRG…ASSLLSHVFF (312 aa)) is the Protein kinase domain. Residues 64–72 (IGRGFDNLT) and lysine 89 contribute to the ATP site.

This sequence belongs to the protein kinase superfamily. STE Ser/Thr protein kinase family. STE20 subfamily. As to quaternary structure, component of a trimeric complex composed of STK11/LKB1, STRAD (STRADA or STRADB) and CAB39/MO25 (CAB39/MO25alpha or CAB39L/MO25beta): the complex tethers STK11/LKB1 in the cytoplasm and stimulates its catalytic activity. Interacts with BIRC4/XIAP. These two proteins are likely to coexist in a complex with TAK1, TRAF6, TAB1 and TAB2.

It localises to the nucleus. The protein resides in the cytoplasm. Functionally, pseudokinase which, in complex with CAB39/MO25 (CAB39/MO25alpha or CAB39L/MO25beta), binds to and activates STK11/LKB1. Adopts a closed conformation typical of active protein kinases and binds STK11/LKB1 as a pseudosubstrate, promoting conformational change of STK11/LKB1 in an active conformation. This is STE20-related kinase adapter protein beta (Stradb) from Mus musculus (Mouse).